We begin with the raw amino-acid sequence, 266 residues long: MWTYPEIDPVALTFGPLQIHWYGLMYLAGFAFFWGYGSYKAKFSDHWTAERVGDFLFYGALGVILGGRIGYILFYDLAHYIAEPLDVFQVWKGGMAFHGGLIGVMVAMWLFARKMQVSMFVVADFVAPMVPVGLFFGRIGNFINGELWGKVTDSSLGMKVYDPTLNMVVSKYPTQLLEALLEGIVLFIILMFYTRSPRPLGAASGLFIGLYGLFRFYVEFFRLPDPQLGYLFWGWVTMGQLLSLPMILIGFALVVWAYRNNRVMAP.

4 helical membrane-spanning segments follow: residues 14–34, 55–75, 91–111, and 117–137; these read FGPLQIHWYGLMYLAGFAFFW, FLFYGALGVILGGRIGYILFY, WKGGMAFHGGLIGVMVAMWLF, and VSMFVVADFVAPMVPVGLFFG. R138 lines the a 1,2-diacyl-sn-glycero-3-phospho-(1'-sn-glycerol) pocket. 3 helical membrane passes run 172-192, 201-221, and 235-255; these read YPTQLLEALLEGIVLFIILMF, GAASGLFIGLYGLFRFYVEFF, and WVTMGQLLSLPMILIGFALVV.

Belongs to the Lgt family.

It is found in the cell inner membrane. The catalysed reaction is L-cysteinyl-[prolipoprotein] + a 1,2-diacyl-sn-glycero-3-phospho-(1'-sn-glycerol) = an S-1,2-diacyl-sn-glyceryl-L-cysteinyl-[prolipoprotein] + sn-glycerol 1-phosphate + H(+). It participates in protein modification; lipoprotein biosynthesis (diacylglyceryl transfer). Functionally, catalyzes the transfer of the diacylglyceryl group from phosphatidylglycerol to the sulfhydryl group of the N-terminal cysteine of a prolipoprotein, the first step in the formation of mature lipoproteins. The protein is Phosphatidylglycerol--prolipoprotein diacylglyceryl transferase of Hydrogenovibrio crunogenus (strain DSM 25203 / XCL-2) (Thiomicrospira crunogena).